A 92-amino-acid chain; its full sequence is Small ribosomal subunit protein uS19 (92 aa).

Belongs to the universal ribosomal protein uS19 family.

In terms of biological role, protein S19 forms a complex with S13 that binds strongly to the 16S ribosomal RNA. The chain is Small ribosomal subunit protein uS19 from Beijerinckia indica subsp. indica (strain ATCC 9039 / DSM 1715 / NCIMB 8712).